The following is a 247-amino-acid chain: Carboxy-S-adenosyl-L-methionine synthase (247 aa).

Residues Tyr39, Gly64–Ser66, Asp89–Asn90, Asp117–Ile118, Asn132, and Arg199 each bind S-adenosyl-L-methionine.

Belongs to the class I-like SAM-binding methyltransferase superfamily. Cx-SAM synthase family. As to quaternary structure, homodimer.

It catalyses the reaction prephenate + S-adenosyl-L-methionine = carboxy-S-adenosyl-L-methionine + 3-phenylpyruvate + H2O. Its function is as follows. Catalyzes the conversion of S-adenosyl-L-methionine (SAM) to carboxy-S-adenosyl-L-methionine (Cx-SAM). The protein is Carboxy-S-adenosyl-L-methionine synthase of Salmonella agona (strain SL483).